The following is a 219-amino-acid chain: UPF0173 metal-dependent hydrolase Mlab_1154 (219 aa).

The protein belongs to the UPF0173 family.

This chain is UPF0173 metal-dependent hydrolase Mlab_1154, found in Methanocorpusculum labreanum (strain ATCC 43576 / DSM 4855 / Z).